A 79-amino-acid polypeptide reads, in one-letter code: Acyl carrier protein (79 aa).

Residues 4-79 (AEIKDKVYDI…QAIDYIVNKK (76 aa)) form the Carrier domain. Ser39 is subject to O-(pantetheine 4'-phosphoryl)serine.

Belongs to the acyl carrier protein (ACP) family. Post-translationally, 4'-phosphopantetheine is transferred from CoA to a specific serine of apo-ACP by AcpS. This modification is essential for activity because fatty acids are bound in thioester linkage to the sulfhydryl of the prosthetic group.

The protein localises to the cytoplasm. It functions in the pathway lipid metabolism; fatty acid biosynthesis. Carrier of the growing fatty acid chain in fatty acid biosynthesis. In Pelodictyon phaeoclathratiforme (strain DSM 5477 / BU-1), this protein is Acyl carrier protein.